The sequence spans 216 residues: Ornithine decarboxylase antizyme 1 (216 aa).

Belongs to the ODC antizyme family. In terms of assembly, interacts with ODC1 and thereby sterically blocks ODC homodimerization.

Its function is as follows. Ornithine decarboxylase (ODC) antizyme protein that negatively regulates ODC activity and intracellular polyamine biosynthesis and uptake in response to increased intracellular polyamine levels. Binds to ODC monomers, inhibiting the assembly of the functional ODC homodimer, and targets the monomers for ubiquitin-independent proteolytic destruction by the 26S proteasome. This chain is Ornithine decarboxylase antizyme 1 (oaz1), found in Xenopus laevis (African clawed frog).